The chain runs to 419 residues: Pyrrolysine--tRNA ligase (419 aa).

Positions 100–157 are disordered; sequence APKVKKAMPKSVSRAPKPLENSVSAKASTNTSRSVPSPAKSTPNSSVPASAPAPSLTR. A compositionally biased stretch (polar residues) spans 120–141; that stretch reads NSVSAKASTNTSRSVPSPAKST. Residues 142-154 are compositionally biased toward low complexity; it reads PNSSVPASAPAPS.

The protein belongs to the class-II aminoacyl-tRNA synthetase family.

The protein resides in the cytoplasm. It carries out the reaction tRNA(Pyl) + L-pyrrolysine + ATP = L-pyrrolysyl-tRNA(Pyl) + AMP + diphosphate. Functionally, catalyzes the attachment of pyrrolysine to tRNA(Pyl). Pyrrolysine is a lysine derivative encoded by the termination codon UAG. This is Pyrrolysine--tRNA ligase (pylS) from Methanosarcina barkeri.